The following is a 318-amino-acid chain: Solute carrier family 25 member 34 (318 aa).

3 Solcar repeats span residues 18 to 111 (VSPA…ACQA), 115 to 208 (QQPG…AKAW), and 218 to 309 (DSWL…LRKL). A run of 6 helical transmembrane segments spans residues 21–41 (AVDL…TNPL), 59–79 (TYPR…RADG), 112–134 (GLTQ…GAFV), 184–205 (VGAA…FTSA), 220–240 (WLAT…VMAP), and 292–315 (LGPH…RAQH).

It belongs to the mitochondrial carrier (TC 2.A.29) family.

The protein resides in the mitochondrion inner membrane. It catalyses the reaction a dicarboxylate(in) + sulfate(out) = a dicarboxylate(out) + sulfate(in). Putative antiporter that exchanges dicarboxylates and sulfur oxoanions across the inner membrane of mitochondria. This chain is Solute carrier family 25 member 34 (Slc25a34), found in Rattus norvegicus (Rat).